The chain runs to 57 residues: Small ribosomal subunit protein bS21 (57 aa).

Residues 35–57 (RERYEKPSLRRKRKQEAARKRNR) are disordered.

The protein belongs to the bacterial ribosomal protein bS21 family.

This chain is Small ribosomal subunit protein bS21, found in Thermosynechococcus vestitus (strain NIES-2133 / IAM M-273 / BP-1).